Here is a 188-residue protein sequence, read N- to C-terminus: ATP synthase subunit delta (188 aa).

The protein belongs to the ATPase delta chain family. As to quaternary structure, F-type ATPases have 2 components, F(1) - the catalytic core - and F(0) - the membrane proton channel. F(1) has five subunits: alpha(3), beta(3), gamma(1), delta(1), epsilon(1). F(0) has three main subunits: a(1), b(2) and c(10-14). The alpha and beta chains form an alternating ring which encloses part of the gamma chain. F(1) is attached to F(0) by a central stalk formed by the gamma and epsilon chains, while a peripheral stalk is formed by the delta and b chains.

It is found in the cell inner membrane. Functionally, f(1)F(0) ATP synthase produces ATP from ADP in the presence of a proton or sodium gradient. F-type ATPases consist of two structural domains, F(1) containing the extramembraneous catalytic core and F(0) containing the membrane proton channel, linked together by a central stalk and a peripheral stalk. During catalysis, ATP synthesis in the catalytic domain of F(1) is coupled via a rotary mechanism of the central stalk subunits to proton translocation. Its function is as follows. This protein is part of the stalk that links CF(0) to CF(1). It either transmits conformational changes from CF(0) to CF(1) or is implicated in proton conduction. The sequence is that of ATP synthase subunit delta from Rhizobium etli (strain CIAT 652).